The chain runs to 356 residues: uncharacterized protein (356 aa).

6 consecutive transmembrane segments (helical) span residues 2–22 (FEAF…FHRL), 35–55 (AYVT…PIPY), 74–94 (FTNM…EIVV), 99–119 (IMYG…GPFL), 124–144 (VLSL…VALV), and 154–174 (IILI…FVDI). Positions 218-353 (QSIALLLIDI…GRNKVMFNPI (136 aa)) constitute a GGDEF domain.

It localises to the cell membrane. This is an uncharacterized protein from Staphylococcus aureus (strain bovine RF122 / ET3-1).